A 170-amino-acid chain; its full sequence is AP-5 complex subunit sigma-1 (170 aa).

In terms of assembly, probably part of the adaptor protein complex 5 (AP-5) a tetramer composed of AP5B1, AP5M1, AP5S1 and AP5Z1. Interacts with ZFYVE26 and SPG11.

The protein localises to the cytoplasm. Its subcellular location is the cytosol. It is found in the late endosome membrane. The protein resides in the lysosome membrane. Functionally, as part of AP-5, a probable fifth adaptor protein complex it may be involved in endosomal transport. The protein is AP-5 complex subunit sigma-1 (Ap5s1) of Mus musculus (Mouse).